The sequence spans 156 residues: Ribosomal RNA large subunit methyltransferase H (156 aa).

S-adenosyl-L-methionine contacts are provided by residues L73, G104, and 123–128 (LSALTL).

It belongs to the RNA methyltransferase RlmH family. Homodimer.

Its subcellular location is the cytoplasm. The enzyme catalyses pseudouridine(1915) in 23S rRNA + S-adenosyl-L-methionine = N(3)-methylpseudouridine(1915) in 23S rRNA + S-adenosyl-L-homocysteine + H(+). Its function is as follows. Specifically methylates the pseudouridine at position 1915 (m3Psi1915) in 23S rRNA. In Vibrio vulnificus (strain CMCP6), this protein is Ribosomal RNA large subunit methyltransferase H.